Consider the following 531-residue polypeptide: Probable protein phosphatase 2C 66 (531 aa).

Residues 1–47 (MGSCLSSDLPPRAGAGAGASPGWPQRWRRRRQRGVERGGAVSGGGGG) are disordered. Residues 10-25 (PPRAGAGAGASPGWPQ) are compositionally biased toward low complexity. The PPM-type phosphatase domain occupies 88–401 (AACLHTQQGR…DDCAVVCLFL (314 aa)). Mn(2+) contacts are provided by aspartate 123 and glycine 124. Over residues 151 to 172 (SANEDTSSHQNGSISGSVNSEE) the composition is skewed to polar residues. Positions 151 to 176 (SANEDTSSHQNGSISGSVNSEESPVV) are disordered. Mn(2+) is bound by residues aspartate 346 and aspartate 392.

This sequence belongs to the PP2C family. The cofactor is Mg(2+). It depends on Mn(2+) as a cofactor.

The enzyme catalyses O-phospho-L-seryl-[protein] + H2O = L-seryl-[protein] + phosphate. It carries out the reaction O-phospho-L-threonyl-[protein] + H2O = L-threonyl-[protein] + phosphate. This Oryza sativa subsp. japonica (Rice) protein is Probable protein phosphatase 2C 66.